Reading from the N-terminus, the 195-residue chain is Protein GrpE (195 aa).

Residues methionine 1 to lysine 60 are disordered. Residues glycine 37 to lysine 60 show a composition bias toward basic and acidic residues.

The protein belongs to the GrpE family. As to quaternary structure, homodimer.

The protein localises to the cytoplasm. Its function is as follows. Participates actively in the response to hyperosmotic and heat shock by preventing the aggregation of stress-denatured proteins, in association with DnaK and GrpE. It is the nucleotide exchange factor for DnaK and may function as a thermosensor. Unfolded proteins bind initially to DnaJ; upon interaction with the DnaJ-bound protein, DnaK hydrolyzes its bound ATP, resulting in the formation of a stable complex. GrpE releases ADP from DnaK; ATP binding to DnaK triggers the release of the substrate protein, thus completing the reaction cycle. Several rounds of ATP-dependent interactions between DnaJ, DnaK and GrpE are required for fully efficient folding. In Limosilactobacillus fermentum (strain NBRC 3956 / LMG 18251) (Lactobacillus fermentum), this protein is Protein GrpE.